The chain runs to 39 residues: Adipokinetic prohormone type 2 (39 aa).

A Pyrrolidone carboxylic acid modification is found at Gln1. Residue Trp8 is modified to Tryptophan amide.

This sequence belongs to the AKH/HRTH/RPCH family. In terms of assembly, adipokinetic hormone precursor-related peptide (APRP) can form three type of disulfide-bond dimers: p1 (alpha-alpha), p2 (alpha-beta), and p3 (beta-beta).

It localises to the secreted. Functionally, this hormone, released from cells in the corpora cardiaca, causes release of diglycerides from the fat body and stimulation of muscles to use these diglycerides as an energy source during energy-demanding processes. The chain is Adipokinetic prohormone type 2 from Schistocerca gregaria (Desert locust).